Consider the following 470-residue polypeptide: Probable citrate synthase, mitochondrial (470 aa).

Residues His-297, His-351, and Asp-406 contribute to the active site.

Belongs to the citrate synthase family. Homodimer.

The protein resides in the mitochondrion matrix. It catalyses the reaction oxaloacetate + acetyl-CoA + H2O = citrate + CoA + H(+). It functions in the pathway carbohydrate metabolism; tricarboxylic acid cycle; isocitrate from oxaloacetate: step 1/2. In Leishmania infantum, this protein is Probable citrate synthase, mitochondrial.